Here is a 380-residue protein sequence, read N- to C-terminus: Queuine tRNA-ribosyltransferase (380 aa).

Catalysis depends on D96, which acts as the Proton acceptor. Residues 96–100, D150, Q193, and G220 each bind substrate; that span reads DSGGF. Positions 251–257 are RNA binding; that stretch reads GVGAPDS. D270 serves as the catalytic Nucleophile. An RNA binding; important for wobble base 34 recognition region spans residues 275 to 279; sequence TRIAR. Residues C308, C310, C313, and H339 each coordinate Zn(2+).

It belongs to the queuine tRNA-ribosyltransferase family. In terms of assembly, homodimer. Within each dimer, one monomer is responsible for RNA recognition and catalysis, while the other monomer binds to the replacement base PreQ1. The cofactor is Zn(2+).

It carries out the reaction 7-aminomethyl-7-carbaguanine + guanosine(34) in tRNA = 7-aminomethyl-7-carbaguanosine(34) in tRNA + guanine. Its pathway is tRNA modification; tRNA-queuosine biosynthesis. Its function is as follows. Catalyzes the base-exchange of a guanine (G) residue with the queuine precursor 7-aminomethyl-7-deazaguanine (PreQ1) at position 34 (anticodon wobble position) in tRNAs with GU(N) anticodons (tRNA-Asp, -Asn, -His and -Tyr). Catalysis occurs through a double-displacement mechanism. The nucleophile active site attacks the C1' of nucleotide 34 to detach the guanine base from the RNA, forming a covalent enzyme-RNA intermediate. The proton acceptor active site deprotonates the incoming PreQ1, allowing a nucleophilic attack on the C1' of the ribose to form the product. After dissociation, two additional enzymatic reactions on the tRNA convert PreQ1 to queuine (Q), resulting in the hypermodified nucleoside queuosine (7-(((4,5-cis-dihydroxy-2-cyclopenten-1-yl)amino)methyl)-7-deazaguanosine). The chain is Queuine tRNA-ribosyltransferase from Streptococcus pyogenes serotype M6 (strain ATCC BAA-946 / MGAS10394).